The primary structure comprises 217 residues: Pyridoxine/pyridoxamine 5'-phosphate oxidase (217 aa).

Substrate contacts are provided by residues 13 to 16 and Lys-71; that span reads RREY. FMN is bound by residues 66–71, 81–82, Arg-87, Lys-88, and Gln-110; these read RTVLLK and YT. The substrate site is built by Tyr-128, Arg-132, and Ser-136. FMN-binding positions include 145 to 146 and Trp-190; that span reads QS. 196 to 198 contributes to the substrate binding site; that stretch reads RLH. Arg-200 is an FMN binding site.

Belongs to the pyridoxamine 5'-phosphate oxidase family. In terms of assembly, homodimer. The cofactor is FMN.

It carries out the reaction pyridoxamine 5'-phosphate + O2 + H2O = pyridoxal 5'-phosphate + H2O2 + NH4(+). The enzyme catalyses pyridoxine 5'-phosphate + O2 = pyridoxal 5'-phosphate + H2O2. It functions in the pathway cofactor metabolism; pyridoxal 5'-phosphate salvage; pyridoxal 5'-phosphate from pyridoxamine 5'-phosphate: step 1/1. The protein operates within cofactor metabolism; pyridoxal 5'-phosphate salvage; pyridoxal 5'-phosphate from pyridoxine 5'-phosphate: step 1/1. Functionally, catalyzes the oxidation of either pyridoxine 5'-phosphate (PNP) or pyridoxamine 5'-phosphate (PMP) into pyridoxal 5'-phosphate (PLP). The polypeptide is Pyridoxine/pyridoxamine 5'-phosphate oxidase (Rubrobacter xylanophilus (strain DSM 9941 / JCM 11954 / NBRC 16129 / PRD-1)).